Consider the following 445-residue polypeptide: UPF0210 protein Ccon26_06850 (445 aa).

It belongs to the UPF0210 family. In terms of assembly, homodimer.

The chain is UPF0210 protein Ccon26_06850 from Campylobacter concisus (strain 13826).